A 356-amino-acid chain; its full sequence is Probable cytosolic iron-sulfur protein assembly protein 1 (356 aa).

WD repeat units follow at residues 34-73 (GHKR…IRAE), 89-128 (GHDS…DYEC), 134-173 (EHSQ…DWYC), 179-218 (AHSS…ECVE), 244-291 (HFSG…ATLR), and 319-356 (AHGS…RIWT).

The protein belongs to the WD repeat CIA1 family.

Its function is as follows. Essential component of the cytosolic iron-sulfur (Fe/S) protein assembly machinery. Required for the maturation of extramitochondrial Fe/S proteins. This Malassezia globosa (strain ATCC MYA-4612 / CBS 7966) (Dandruff-associated fungus) protein is Probable cytosolic iron-sulfur protein assembly protein 1.